The chain runs to 487 residues: L-tartrate/succinate antiporter (487 aa).

Transmembrane regions (helical) follow at residues 10-30 (YLAP…AGLE), 33-53 (TWLY…EPVP), 54-74 (GAVV…WLLF), 93-113 (WAVS…FMFG), 137-157 (TLFL…VTPS), 189-209 (IGSY…AIFL), 236-256 (FLGM…LAYV), 292-312 (LIVG…AAMV), 313-333 (GYSV…DIVS), 340-360 (VFFW…TGFI), 370-390 (SLSG…FYLL), 393-413 (FFAS…AAAL), 418-438 (IPLP…SILT), and 465-485 (IFGL…MPVV).

The protein belongs to the SLC13A/DASS transporter (TC 2.A.47) family. DIT1 subfamily.

It is found in the cell inner membrane. It carries out the reaction (2R,3R)-tartrate(out) + succinate(in) = (2R,3R)-tartrate(in) + succinate(out). Functionally, catalyzes the uptake of tartrate in exchange for intracellular succinate. Essential for anaerobic L-tartrate fermentation. This chain is L-tartrate/succinate antiporter (ttdT), found in Shigella sonnei (strain Ss046).